Reading from the N-terminus, the 479-residue chain is Ribosomal RNA small subunit methyltransferase F (479 aa).

S-adenosyl-L-methionine contacts are provided by residues 125–131 (AAAPGSK), glutamate 149, aspartate 176, and aspartate 194. Catalysis depends on cysteine 247, which acts as the Nucleophile.

This sequence belongs to the class I-like SAM-binding methyltransferase superfamily. RsmB/NOP family.

It is found in the cytoplasm. The catalysed reaction is cytidine(1407) in 16S rRNA + S-adenosyl-L-methionine = 5-methylcytidine(1407) in 16S rRNA + S-adenosyl-L-homocysteine + H(+). Specifically methylates the cytosine at position 1407 (m5C1407) of 16S rRNA. In Escherichia coli (strain ATCC 8739 / DSM 1576 / NBRC 3972 / NCIMB 8545 / WDCM 00012 / Crooks), this protein is Ribosomal RNA small subunit methyltransferase F.